Here is a 393-residue protein sequence, read N- to C-terminus: Calreticulin (393 aa).

A signal peptide spans 1 to 16; that stretch reads MLSILLTLLLSKYALG. Residue N27 is glycosylated (N-linked (GlcNAc...) asparagine). A disulfide bond links C103 and C135. Positions 107, 109, 126, and 133 each coordinate an alpha-D-glucoside. 7 repeat units span residues 189–200, 208–219, 225–236, 242–253, 257–267, 271–281, and 285–295. The interval 189 to 253 is 4 X 12 AA approximate repeats; the sequence is VEEGSLEDDW…DAKKPDDWDD (65 aa). A disordered region spans residues 194–277; that stretch reads LEDDWDMLPP…EYKGEWTPRR (84 aa). The segment covering 202 to 216 has biased composition (basic and acidic residues); it reads PPKKIDDPNDKKPDD. Residues 217–226 are compositionally biased toward acidic residues; that stretch reads WVDEQFIDDP. Composition is skewed to basic and acidic residues over residues 227-249 and 258-277; these read DDKK…KKPD and EWER…TPRR. The interval 257 to 295 is 3 X 11 AA approximate repeats; it reads GEWERPQKDNPEYKGEWTPRRIDNPKYKGEWKPVQIDNP. D315 contributes to the an alpha-D-glucoside binding site. A disordered region spans residues 351-393; sequence AEVAKEQSSAKDDKEEAEETKERKELPYDAKASDEPSGDHDEL. A Prevents secretion from ER motif is present at residues 390–393; sequence HDEL.

The protein belongs to the calreticulin family.

The protein localises to the endoplasmic reticulum lumen. Functionally, molecular calcium-binding chaperone promoting folding, oligomeric assembly and quality control in the ER via the calreticulin/calnexin cycle. This lectin may interact transiently with almost all of the monoglucosylated glycoproteins that are synthesized in the ER. The chain is Calreticulin from Schistosoma mansoni (Blood fluke).